The primary structure comprises 1943 residues: Cadherin-86C (1943 aa).

Positions 1–102 are disordered; it reads MASTSSSQPE…QNQQMQHHWP (102 aa). The Extracellular portion of the chain corresponds to 1-934; sequence MASTSSSQPE…TDTQYKAENK (934 aa). The N-linked (GlcNAc...) asparagine glycan is linked to Asn-12. Positions 50–89 are enriched in basic residues; the sequence is PHHHHHHHHQHHHHHRLKQHHRHHHHHHRLQHHHHHHQQQ. Residues 90–100 are compositionally biased toward low complexity; sequence HNHQNQQMQHH. Cadherin domains lie at 238 to 366, 367 to 483, 484 to 600, 601 to 708, and 709 to 832; these read CSIT…PPVF, TSAP…PPYF, ENDH…APVF, EQPA…TPIF, and DKDL…SVKF. Asn-244, Asn-419, Asn-531, Asn-579, Asn-585, Asn-612, and Asn-645 each carry an N-linked (GlcNAc...) asparagine glycan. Residue Asn-912 is glycosylated (N-linked (GlcNAc...) asparagine). A helical transmembrane segment spans residues 935 to 955; that stretch reads VLFWLLILLATLVALTILILL. At 956–1943 the chain is on the cytoplasmic side; the sequence is LCCICSWCPL…NSGGESPQYS (988 aa). Disordered regions lie at residues 1038–1058, 1390–1442, 1458–1516, 1546–1695, and 1707–1895; these read DVGR…SAEE, KPSR…RKRI, EEEE…SHNR, YKHS…ERNV, and KSSV…DDHD. The span at 1047–1058 shows a compositional bias: basic and acidic residues; that stretch reads EGDRRHIQSAEE. The span at 1426–1442 shows a compositional bias: basic residues; the sequence is IKRRRTKKRPRQPRKRI. 2 stretches are compositionally biased toward basic and acidic residues: residues 1486–1497 and 1507–1516; these read QLSDESRKDQSR and HRSESDSHNR. Positions 1552–1568 are enriched in acidic residues; sequence DFDEDDTEYSIDSDGDE. Residues 1580–1602 are compositionally biased toward basic and acidic residues; it reads QENERYRRQERTYAEPENPVDRK. Polar residues predominate over residues 1633-1667; the sequence is KQTSSEPPHNRVSISKYESTVTENGRKLMSTSTEI. The span at 1709–1724 shows a compositional bias: low complexity; it reads SVSGRTSTESSKSQPS. 4 stretches are compositionally biased toward basic and acidic residues: residues 1754–1764, 1774–1793, 1800–1810, and 1837–1863; these read TGGRYKPEPAP, LLKE…ETDT, HSEHRFERENA, and KESK…ENEV. Over residues 1879-1889 the composition is skewed to polar residues; sequence HPTQKQLNAST.

As to expression, as cell intercalation proceeds, a row of stigmatophore cells surrounding the spiracular chamber show expression of Cad86C. Expression is regulated by the Abd-B cascade, requiring sal. Expressed in a broad region of the morphogenetic furrow and in clusters of cells posterior to the morphogenetic furrow. Weakly expressed in the epithelium of wing imaginal disks. In eye imaginal disk cells within the morphogenetic furrow, expression is localized to the apical region.

It is found in the cell membrane. Cadherins are calcium-dependent cell adhesion proteins. They preferentially interact with themselves in a homophilic manner in connecting cells. The protein is Cadherin-86C (Cad86C) of Drosophila melanogaster (Fruit fly).